The following is a 1135-amino-acid chain: Nonribosomal peptide synthetase 9 (1135 aa).

The interval 23-77 (TKQITTATYIKLAWAVVISCNTGSNDTVFGITVNGRGAPIDGAGEMTGATIATIP) is condensation 1. The interval 177 to 562 (SYAELIRSAN…RRIDEIQEAT (386 aa)) is adenylation. A disordered region spans residues 485-507 (GPSPPVGRSSSNRAGSGRCAMGS). Residues 491 to 502 (GRSSSNRAGSGR) show a composition bias toward low complexity. The Carrier domain maps to 672–748 (APSNRVEQDL…AIANKIGDVQ (77 aa)). Residue S709 is modified to O-(pantetheine 4'-phosphoryl)serine. The tract at residues 746-999 (DVQRAAIKLV…TTLWPVVAQV (254 aa)) is condensation 2.

Belongs to the NRP synthetase family.

Nonribosomal peptide synthesis (NRPS) is a key mechanism responsible for the biosynthesis of bioactive metabolites which are potentially contributing to organismal virulence. The polypeptide is Nonribosomal peptide synthetase 9 (NRPS9) (Aspergillus fumigatus (strain ATCC MYA-4609 / CBS 101355 / FGSC A1100 / Af293) (Neosartorya fumigata)).